The chain runs to 384 residues: tRNA-specific 2-thiouridylase MnmA (384 aa).

ATP is bound by residues 18 to 25 (AMSGGVDS) and leucine 44. Cysteine 112 (nucleophile) is an active-site residue. A disulfide bridge connects residues cysteine 112 and cysteine 209. Glycine 136 serves as a coordination point for ATP. The tract at residues 159-161 (RDQ) is interaction with tRNA. Catalysis depends on cysteine 209, which acts as the Cysteine persulfide intermediate.

Belongs to the MnmA/TRMU family.

It localises to the cytoplasm. It carries out the reaction S-sulfanyl-L-cysteinyl-[protein] + uridine(34) in tRNA + AH2 + ATP = 2-thiouridine(34) in tRNA + L-cysteinyl-[protein] + A + AMP + diphosphate + H(+). Its function is as follows. Catalyzes the 2-thiolation of uridine at the wobble position (U34) of tRNA, leading to the formation of s(2)U34. This Methylobacterium radiotolerans (strain ATCC 27329 / DSM 1819 / JCM 2831 / NBRC 15690 / NCIMB 10815 / 0-1) protein is tRNA-specific 2-thiouridylase MnmA.